The chain runs to 304 residues: N-acetyl-D-glucosamine kinase (304 aa).

ATP contacts are provided by residues 4–11 (GFDIGGTK) and 133–140 (GFGGGLIF). Zn(2+) is bound by residues His157, Cys178, Cys180, and Cys185.

Belongs to the ROK (NagC/XylR) family. NagK subfamily.

The enzyme catalyses N-acetyl-D-glucosamine + ATP = N-acetyl-D-glucosamine 6-phosphate + ADP + H(+). Its pathway is cell wall biogenesis; peptidoglycan recycling. In terms of biological role, catalyzes the phosphorylation of N-acetyl-D-glucosamine (GlcNAc) derived from cell-wall degradation, yielding GlcNAc-6-P. The polypeptide is N-acetyl-D-glucosamine kinase (Mannheimia succiniciproducens (strain KCTC 0769BP / MBEL55E)).